We begin with the raw amino-acid sequence, 126 residues long: Small ribosomal subunit protein uS13 (126 aa).

The disordered stretch occupies residues 92–126 (HRRGLPVRGQRTKTNARTRKGPKRTVAGKKKAGRK).

This sequence belongs to the universal ribosomal protein uS13 family. As to quaternary structure, part of the 30S ribosomal subunit. Forms a loose heterodimer with protein S19. Forms two bridges to the 50S subunit in the 70S ribosome.

In terms of biological role, located at the top of the head of the 30S subunit, it contacts several helices of the 16S rRNA. In the 70S ribosome it contacts the 23S rRNA (bridge B1a) and protein L5 of the 50S subunit (bridge B1b), connecting the 2 subunits; these bridges are implicated in subunit movement. Contacts the tRNAs in the A and P-sites. The protein is Small ribosomal subunit protein uS13 of Kineococcus radiotolerans (strain ATCC BAA-149 / DSM 14245 / SRS30216).